The chain runs to 312 residues: Phospho-N-acetylmuramoyl-pentapeptide-transferase (312 aa).

9 consecutive transmembrane segments (helical) span residues 1-21, 48-68, 76-96, 115-135, 140-160, 165-185, 214-234, 238-258, and 289-309; these read MMVV…HYSK, GVAF…FGGI, EVMI…DDFL, FPLQ…LASH, GFMS…FVMV, AFNF…IVLL, VFMG…AYAL, VWLL…VVIQ, and VTLR…WLMG.

Belongs to the glycosyltransferase 4 family. MraY subfamily. The cofactor is Mg(2+).

The protein resides in the cell membrane. The enzyme catalyses UDP-N-acetyl-alpha-D-muramoyl-L-alanyl-gamma-D-glutamyl-meso-2,6-diaminopimeloyl-D-alanyl-D-alanine + di-trans,octa-cis-undecaprenyl phosphate = di-trans,octa-cis-undecaprenyl diphospho-N-acetyl-alpha-D-muramoyl-L-alanyl-D-glutamyl-meso-2,6-diaminopimeloyl-D-alanyl-D-alanine + UMP. It participates in cell wall biogenesis; peptidoglycan biosynthesis. In terms of biological role, catalyzes the initial step of the lipid cycle reactions in the biosynthesis of the cell wall peptidoglycan: transfers peptidoglycan precursor phospho-MurNAc-pentapeptide from UDP-MurNAc-pentapeptide onto the lipid carrier undecaprenyl phosphate, yielding undecaprenyl-pyrophosphoryl-MurNAc-pentapeptide, known as lipid I. The protein is Phospho-N-acetylmuramoyl-pentapeptide-transferase of Deinococcus radiodurans (strain ATCC 13939 / DSM 20539 / JCM 16871 / CCUG 27074 / LMG 4051 / NBRC 15346 / NCIMB 9279 / VKM B-1422 / R1).